Reading from the N-terminus, the 559-residue chain is DDB1- and CUL4-associated factor 10 (559 aa).

Residues 1–119 form a disordered region; sequence MFPFGPHSPG…HGLGAGLGGP (119 aa). S53, S63, S89, and S92 each carry phosphoserine. The segment covering 56–86 has biased composition (low complexity); sequence RPGAPSLSPAPRSGELGLPGAPESSTASAPG. A compositionally biased stretch (pro residues) spans 87 to 97; the sequence is EPSPPSPPCRR. Omega-N-methylarginine is present on R134. WD repeat units lie at residues 166-205, 209-247, 251-290, and 296-335; these read RTHG…HIKT, AHED…TKVC, GHTS…EDGC, and FHTR…KSLE. At S349 the chain carries Phosphoserine. A compositionally biased stretch (low complexity) spans 350-367; that stretch reads SSDLTTSSSSSGPRVSGS. The tract at residues 350 to 396 is disordered; the sequence is SSDLTTSSSSSGPRVSGSPCHHSDSNSSEKHMSRASQREGVSPRNSL. The span at 370–381 shows a compositional bias: basic and acidic residues; that stretch reads HHSDSNSSEKHM. 3 WD repeats span residues 408–448, 470–508, and 526–559; these read DHGN…QEGA, VGRG…SELV, and SHND…QPKF.

It belongs to the WD repeat DCAF10 family. Interacts with DDB1.

Its pathway is protein modification; protein ubiquitination. In terms of biological role, may function as a substrate receptor for CUL4-DDB1 E3 ubiquitin-protein ligase complex. This chain is DDB1- and CUL4-associated factor 10 (DCAF10), found in Homo sapiens (Human).